The primary structure comprises 845 residues: Protein translocase subunit SecA (845 aa).

ATP contacts are provided by residues glutamine 85, 103-107, and aspartate 492; that span reads GEGKT. The disordered stretch occupies residues 787–845; sequence REQVAQGQAEHPETEQDAAAQSNTSAKRQPVRVDKKVGRNDLCPCGSGKKFKNCHGRNA. The Zn(2+) site is built by cysteine 829, cysteine 831, cysteine 840, and histidine 841. Over residues 835–845 the composition is skewed to basic residues; that stretch reads KKFKNCHGRNA.

Belongs to the SecA family. In terms of assembly, monomer and homodimer. Part of the essential Sec protein translocation apparatus which comprises SecA, SecYEG and auxiliary proteins SecDF. Other proteins may also be involved. It depends on Zn(2+) as a cofactor.

The protein resides in the cell membrane. Its subcellular location is the cytoplasm. The catalysed reaction is ATP + H2O + cellular proteinSide 1 = ADP + phosphate + cellular proteinSide 2.. Functionally, part of the Sec protein translocase complex. Interacts with the SecYEG preprotein conducting channel. Has a central role in coupling the hydrolysis of ATP to the transfer of proteins into and across the cell membrane, serving as an ATP-driven molecular motor driving the stepwise translocation of polypeptide chains across the membrane. The sequence is that of Protein translocase subunit SecA from Enterococcus faecalis (strain ATCC 700802 / V583).